Reading from the N-terminus, the 1308-residue chain is Misshapen-like kinase 1 (1308 aa).

In terms of domain architecture, Protein kinase spans 25–289; sequence FELVEVVGNG…TEQLLKFPFI (265 aa). ATP is bound by residues 31–39 and K54; that span reads VGNGTYGQV. Catalysis depends on D153, which acts as the Proton acceptor. Disordered regions lie at residues 299 to 347, 363 to 383, and 395 to 862; these read RIQL…NVPG, KSNSEALKQQQQLQQQQQRDP, and QRRI…GGTM. Residues 317-333 show a composition bias toward acidic residues; it reads EETEYEYSGSEEEDDSH. Phosphoserine occurs at positions 324 and 326. A compositionally biased stretch (low complexity) spans 371–380; the sequence is QQQQLQQQQQ. Basic and acidic residues predominate over residues 396 to 466; that stretch reads RRIEEQKEER…EEQRQSERLQ (71 aa). A compositionally biased stretch (low complexity) spans 479–497; sequence LQQQQQQQQLQKQQQQQQQ. Omega-N-methylarginine occurs at positions 503 and 511. The span at 520-530 shows a compositional bias: basic and acidic residues; sequence AWAREVEERAR. Positions 600 to 610 are enriched in polar residues; the sequence is RSQSLQDQPTR. Over residues 623–633 the composition is skewed to low complexity; that stretch reads PAAVPTPTATP. Phosphoserine is present on S644. Residues 673–685 show a composition bias toward polar residues; that stretch reads QRTSSIATALNTS. D702, S720, S729, S745, S746, and S750 each carry phosphoserine. Basic and acidic residues predominate over residues 702 to 714; the sequence is DLRRSDPGWERSD. Residues 773 to 797 are compositionally biased toward basic and acidic residues; the sequence is AIGEDFVLLKERTLDEAPKPPKKAM. Residues 804–820 show a composition bias toward acidic residues; that stretch reads EEVESSEEEEEEGDGEP. Residues 842–1308 form a mediates interaction with RAP2A region; the sequence is MVVHDVEEIS…TLNRNCIMNW (467 aa). T867 carries the post-translational modification Phosphothreonine. The disordered stretch occupies residues 881-918; that stretch reads GYTNLPDVVQPSHSPTENSKGQSPPTKDGGSDYQSRGL. Residues 891 to 905 are compositionally biased toward polar residues; the sequence is PSHSPTENSKGQSPP. The 288-residue stretch at 995–1282 folds into the CNH domain; it reads NSEILCAALW…KFLCERNDKV (288 aa).

The protein belongs to the protein kinase superfamily. STE Ser/Thr protein kinase family. STE20 subfamily. As to quaternary structure, interacts with RAP2A and TANC1. Interacts with NCK1. It depends on Mg(2+) as a cofactor. In terms of processing, autophosphorylated. Appears to be ubiquitous, expressed in all tissue types examined. Highly expressed in the brain, moderately expressed in kidney and spleen, low levels present in heart and skeletal muscle. Isoform 2 is more abundant in the brain than isoform 1.

It localises to the cytoplasm. The protein localises to the postsynaptic density. It is found in the cell projection. Its subcellular location is the axon. The protein resides in the dendrite. It carries out the reaction L-seryl-[protein] + ATP = O-phospho-L-seryl-[protein] + ADP + H(+). The catalysed reaction is L-threonyl-[protein] + ATP = O-phospho-L-threonyl-[protein] + ADP + H(+). Its function is as follows. Serine/threonine kinase which acts as a negative regulator of Ras-related Rap2-mediated signal transduction to control neuronal structure and AMPA receptor trafficking. Required for normal synaptic density, dendrite complexity, as well as surface AMPA receptor expression in hippocampal neurons. Can activate the JNK and MAPK14/p38 pathways and mediates stimulation of the stress-activated protein kinase MAPK14/p38 MAPK downstream of the Raf/ERK pathway. Phosphorylates TANC1 upon stimulation by RAP2A, MBP and SMAD1. Has an essential function in negative selection of thymocytes, perhaps by coupling NCK1 to activation of JNK1. Activator of the Hippo signaling pathway which plays a pivotal role in organ size control and tumor suppression by restricting proliferation and promoting apoptosis. MAP4Ks act in parallel to and are partially redundant with STK3/MST2 and STK4/MST2 in the phosphorylation and activation of LATS1/2, and establish MAP4Ks as components of the expanded Hippo pathway. This is Misshapen-like kinase 1 from Mus musculus (Mouse).